The following is a 1409-amino-acid chain: DNA-directed RNA polymerase subunit beta' (1409 aa).

Zn(2+) is bound by residues cysteine 70, cysteine 72, cysteine 85, and cysteine 88. 3 residues coordinate Mg(2+): aspartate 460, aspartate 462, and aspartate 464. Zn(2+)-binding residues include cysteine 822, cysteine 896, cysteine 903, and cysteine 906.

This sequence belongs to the RNA polymerase beta' chain family. As to quaternary structure, the RNAP catalytic core consists of 2 alpha, 1 beta, 1 beta' and 1 omega subunit. When a sigma factor is associated with the core the holoenzyme is formed, which can initiate transcription. The cofactor is Mg(2+). It depends on Zn(2+) as a cofactor.

The catalysed reaction is RNA(n) + a ribonucleoside 5'-triphosphate = RNA(n+1) + diphosphate. Its function is as follows. DNA-dependent RNA polymerase catalyzes the transcription of DNA into RNA using the four ribonucleoside triphosphates as substrates. The polypeptide is DNA-directed RNA polymerase subunit beta' (Methylobacillus flagellatus (strain ATCC 51484 / DSM 6875 / VKM B-1610 / KT)).